The sequence spans 204 residues: 3,4-dihydroxy-2-butanone 4-phosphate synthase (204 aa).

A Mg(2+)-binding site is contributed by E30. Position 34 (D34) interacts with D-ribulose 5-phosphate. C59 is modified (S-glutathionyl cysteine). D-ribulose 5-phosphate is bound by residues T85 and 142 to 146 (RRGHT). H145 contributes to the Mg(2+) binding site.

In terms of assembly, homodimer. Mg(2+) is required as a cofactor. It depends on Mn(2+) as a cofactor. In terms of processing, S-glutathionylation is reversible and dependent on a glutaredoxin.

The enzyme catalyses D-ribulose 5-phosphate = (2S)-2-hydroxy-3-oxobutyl phosphate + formate + H(+). It participates in cofactor biosynthesis; riboflavin biosynthesis; 2-hydroxy-3-oxobutyl phosphate from D-ribulose 5-phosphate: step 1/1. Functionally, catalyzes the conversion of D-ribulose 5-phosphate to formate and 3,4-dihydroxy-2-butanone 4-phosphate. This is 3,4-dihydroxy-2-butanone 4-phosphate synthase (RIB3) from Candida albicans (strain SC5314 / ATCC MYA-2876) (Yeast).